A 299-amino-acid polypeptide reads, in one-letter code: Glycine--tRNA ligase alpha subunit (299 aa).

Belongs to the class-II aminoacyl-tRNA synthetase family. In terms of assembly, tetramer of two alpha and two beta subunits.

It localises to the cytoplasm. The enzyme catalyses tRNA(Gly) + glycine + ATP = glycyl-tRNA(Gly) + AMP + diphosphate. The sequence is that of Glycine--tRNA ligase alpha subunit from Desulforapulum autotrophicum (strain ATCC 43914 / DSM 3382 / VKM B-1955 / HRM2) (Desulfobacterium autotrophicum).